The following is a 35-amino-acid chain: Mu-theraphotoxin-Hd1a (35 aa).

3 disulfide bridges follow: Cys-2–Cys-17, Cys-9–Cys-24, and Cys-16–Cys-31.

This sequence belongs to the neurotoxin 10 (Hwtx-1) family. 22 (Htx-4) subfamily. Expressed by the venom gland.

It is found in the secreted. Functionally, gating-modifier toxin that reversibly and voltage-independently inhibits human Nav1.1/SCN1A and Nav1.7/SCN9A (IC(50)=111 nM). It also shows moderate inhibition on Nav1.2/SCN2A (1 uM inhibits current by 55%), Nav1.6/SCN8A (31%), Nav1.3/SCN5A (27%) and Nav1.4/SCN4A (23%). This toxin inhibits Nav1.7/SCN9A by interacting with the S3b-S4 paddle motif in channel domain II. This Cyriopagopus doriae (Tarantula spider) protein is Mu-theraphotoxin-Hd1a.